The chain runs to 131 residues: Small ribosomal subunit protein uS11 (131 aa).

This sequence belongs to the universal ribosomal protein uS11 family. Part of the 30S ribosomal subunit. Interacts with proteins S7 and S18. Binds to IF-3.

In terms of biological role, located on the platform of the 30S subunit, it bridges several disparate RNA helices of the 16S rRNA. Forms part of the Shine-Dalgarno cleft in the 70S ribosome. This Clostridium novyi (strain NT) protein is Small ribosomal subunit protein uS11.